Reading from the N-terminus, the 259-residue chain is 5'-nucleotidase SurE (259 aa).

A divalent metal cation is bound by residues Asp8, Asp9, Ser41, and Asn93.

This sequence belongs to the SurE nucleotidase family. The cofactor is a divalent metal cation.

It is found in the cytoplasm. It carries out the reaction a ribonucleoside 5'-phosphate + H2O = a ribonucleoside + phosphate. Functionally, nucleotidase that shows phosphatase activity on nucleoside 5'-monophosphates. The sequence is that of 5'-nucleotidase SurE from Verminephrobacter eiseniae (strain EF01-2).